Consider the following 538-residue polypeptide: UPF0761 membrane protein PsycPRwf_0630 (538 aa).

6 consecutive transmembrane segments (helical) span residues 43–63, 100–120, 143–163, 183–203, 215–235, and 247–267; these read LLSI…VPAL, LTAI…TTIE, WTII…SSAV, WVQV…YWFI, IAGV…GIIM, and AFAA…LILL. The disordered stretch occupies residues 427 to 538; the sequence is SVFSAQDADA…IITEDDNPNK (112 aa). The segment covering 482-493 has biased composition (low complexity); the sequence is PPDADIKAAAAK. Residues 503–514 are compositionally biased toward basic and acidic residues; it reads KHTETAKQEHKK.

It belongs to the UPF0761 family.

The protein localises to the cell inner membrane. The sequence is that of UPF0761 membrane protein PsycPRwf_0630 from Psychrobacter sp. (strain PRwf-1).